A 507-amino-acid chain; its full sequence is Maturase K (507 aa).

Belongs to the intron maturase 2 family. MatK subfamily.

The protein resides in the plastid. It localises to the chloroplast. In terms of biological role, usually encoded in the trnK tRNA gene intron. Probably assists in splicing its own and other chloroplast group II introns. This chain is Maturase K, found in Nymphaea alba (White water-lily).